Reading from the N-terminus, the 165-residue chain is 6,7-dimethyl-8-ribityllumazine synthase (165 aa).

Residues Phe-24, 62 to 64 (AFE), and 86 to 88 (AVI) each bind 5-amino-6-(D-ribitylamino)uracil. 91–92 (DT) provides a ligand contact to (2S)-2-hydroxy-3-oxobutyl phosphate. His-94 acts as the Proton donor in catalysis. Phe-119 lines the 5-amino-6-(D-ribitylamino)uracil pocket. Arg-133 contacts (2S)-2-hydroxy-3-oxobutyl phosphate.

It belongs to the DMRL synthase family.

The enzyme catalyses (2S)-2-hydroxy-3-oxobutyl phosphate + 5-amino-6-(D-ribitylamino)uracil = 6,7-dimethyl-8-(1-D-ribityl)lumazine + phosphate + 2 H2O + H(+). It participates in cofactor biosynthesis; riboflavin biosynthesis; riboflavin from 2-hydroxy-3-oxobutyl phosphate and 5-amino-6-(D-ribitylamino)uracil: step 1/2. In terms of biological role, catalyzes the formation of 6,7-dimethyl-8-ribityllumazine by condensation of 5-amino-6-(D-ribitylamino)uracil with 3,4-dihydroxy-2-butanone 4-phosphate. This is the penultimate step in the biosynthesis of riboflavin. This Prochlorococcus marinus (strain MIT 9313) protein is 6,7-dimethyl-8-ribityllumazine synthase.